Here is a 793-residue protein sequence, read N- to C-terminus: Caldesmon (793 aa).

The residue at position 12 (Arg-12) is a Phosphoserine. Residue Glu-21 is modified to Phosphotyrosine. Disordered regions lie at residues 26-94 (AYQR…DDEA), 108-407 (QKRL…IKGE), and 434-458 (KKQG…KPTF). A myosin and calmodulin-binding region spans residues 26–207 (AYQRNDDDEE…PKRGSIGENQ (182 aa)). The span at 47–56 (QERLRQKQEE) shows a compositional bias: basic and acidic residues. The segment covering 60–74 (GQVTDQVEVNAQNSV) has biased composition (polar residues). Over residues 108-122 (QKRLQEALERQKEFD) the composition is skewed to basic and acidic residues. Ser-129 is modified (phosphoserine). 2 stretches are compositionally biased toward basic and acidic residues: residues 146-162 (TTEK…RYEI) and 173-188 (QKND…KEDK). Phosphoserine is present on residues Glu-196 and Ser-202. Residues Ile-203 and Glu-209 each participate in a glycyl lysine isopeptide (Lys-Gly) (interchain with G-Cter in SUMO2) cross-link. 2 stretches are compositionally biased toward basic and acidic residues: residues 236–407 (EEPK…IKGE) and 435–458 (KQGE…KPTF). 3 tandem repeats follow at residues 319–332 (EEEK…QRIK), 333–346 (EEEK…QRIK), and 347–360 (EEEK…QRIK). The 3 X 14 AA tandem repeats of E-E-E-K-R-A-A-E-E-R-Q-R-I-K stretch occupies residues 319 to 375 (EEEKRAAEERQRIKEEEKRAAEERQRIKEEEKRAAEERQRIKEEEKRAAEERQRARA). Lys-459 is covalently cross-linked (Glycyl lysine isopeptide (Lys-Gly) (interchain with G-Cter in SUMO2)). Positions 492 to 640 (KSQNGEFMTH…KKPFKCFTPK (149 aa)) are disordered. 2 stretches are compositionally biased toward basic and acidic residues: residues 532-558 (AGKR…KQKQ) and 566-633 (EELK…DKKP). The segment at 564 to 621 (ELEELKKKREERRKVLEEEEQRRKQEEADRKLREEEEKRRLKEEIERRRAEAAEKRQK) is tropomyosin-binding. A Phosphoserine modification is found at Ser-643. Lys-645 participates in a covalent cross-link: Glycyl lysine isopeptide (Lys-Gly) (interchain with G-Cter in SUMO2). The segment at 653–686 (LNKSVQKSSGVKSTHQAAIVSKIDSRLEQYTSAI) is strong actin-binding. Ser-656 is subject to Phosphoserine. Residues 664–674 (KSTHQAAIVSK) are tropomyosin-binding. Disordered regions lie at residues 687–706 (EGTK…PVPA), 721–740 (VFSS…GLKV), and 747–793 (NEWL…PTKV). Positions 716-722 (WEKGNVF) are calmodulin-binding. The segment covering 721–733 (VFSSPTAAGTPNK) has biased composition (polar residues). At Ser-724 the chain carries Phosphoserine. Phosphothreonine occurs at positions 730 and 753. Position 759 is a phosphoserine (Ser-759). Basic and acidic residues predominate over residues 765-784 (SDLRPGDVSSKRNLWEKQSV). A weak actin-binding region spans residues 768-793 (RPGDVSSKRNLWEKQSVDKVTSPTKV). The residue at position 789 (Ser-789) is a Phosphoserine.

This sequence belongs to the caldesmon family. Post-translationally, in non-muscle cells, phosphorylation by CDK1 during mitosis causes caldesmon to dissociate from microfilaments. Phosphorylation reduces caldesmon binding to actin, myosin, and calmodulin as well as its inhibition of actomyosin ATPase activity. Phosphorylation also occurs in both quiescent and dividing smooth muscle cells with similar effects on the interaction with actin and calmodulin and on microfilaments reorganization. CDK1-mediated phosphorylation promotes Schwann cell migration during peripheral nerve regeneration. In terms of tissue distribution, high-molecular-weight caldesmon (isoform 1) is predominantly expressed in smooth muscles, whereas low-molecular-weight caldesmon (isoforms 2, 3, 4 and 5) are widely distributed in non-muscle tissues and cells. Not expressed in skeletal muscle or heart.

It is found in the cytoplasm. The protein localises to the cytoskeleton. It localises to the myofibril. The protein resides in the stress fiber. Functionally, actin- and myosin-binding protein implicated in the regulation of actomyosin interactions in smooth muscle and nonmuscle cells (could act as a bridge between myosin and actin filaments). Stimulates actin binding of tropomyosin which increases the stabilization of actin filament structure. In muscle tissues, inhibits the actomyosin ATPase by binding to F-actin. This inhibition is attenuated by calcium-calmodulin and is potentiated by tropomyosin. Interacts with actin, myosin, two molecules of tropomyosin and with calmodulin. Also plays an essential role during cellular mitosis and receptor capping. Involved in Schwann cell migration during peripheral nerve regeneration. In Homo sapiens (Human), this protein is Caldesmon (CALD1).